The primary structure comprises 365 residues: tRNA-specific 2-thiouridylase MnmA (365 aa).

ATP-binding positions include 9 to 16 (AMSGGVDS) and Met35. Catalysis depends on Cys105, which acts as the Nucleophile. Cysteines 105 and 203 form a disulfide. Gly129 contacts ATP. The tract at residues 153 to 155 (KDQ) is interaction with tRNA. The Cysteine persulfide intermediate role is filled by Cys203. The interval 308–309 (RY) is interaction with tRNA.

It belongs to the MnmA/TRMU family.

The protein resides in the cytoplasm. It carries out the reaction S-sulfanyl-L-cysteinyl-[protein] + uridine(34) in tRNA + AH2 + ATP = 2-thiouridine(34) in tRNA + L-cysteinyl-[protein] + A + AMP + diphosphate + H(+). Catalyzes the 2-thiolation of uridine at the wobble position (U34) of tRNA, leading to the formation of s(2)U34. This Pelotomaculum thermopropionicum (strain DSM 13744 / JCM 10971 / SI) protein is tRNA-specific 2-thiouridylase MnmA.